We begin with the raw amino-acid sequence, 216 residues long: ATP phosphoribosyltransferase (216 aa).

The protein belongs to the ATP phosphoribosyltransferase family. Short subfamily. In terms of assembly, heteromultimer composed of HisG and HisZ subunits.

The protein localises to the cytoplasm. It catalyses the reaction 1-(5-phospho-beta-D-ribosyl)-ATP + diphosphate = 5-phospho-alpha-D-ribose 1-diphosphate + ATP. Its pathway is amino-acid biosynthesis; L-histidine biosynthesis; L-histidine from 5-phospho-alpha-D-ribose 1-diphosphate: step 1/9. Its function is as follows. Catalyzes the condensation of ATP and 5-phosphoribose 1-diphosphate to form N'-(5'-phosphoribosyl)-ATP (PR-ATP). Has a crucial role in the pathway because the rate of histidine biosynthesis seems to be controlled primarily by regulation of HisG enzymatic activity. The chain is ATP phosphoribosyltransferase from Chromohalobacter salexigens (strain ATCC BAA-138 / DSM 3043 / CIP 106854 / NCIMB 13768 / 1H11).